Reading from the N-terminus, the 767-residue chain is Protein transport protein Sec23B (767 aa).

A2 carries the N-acetylalanine modification. Residues C61, C66, C85, and C88 each contribute to the Zn(2+) site. The residue at position 564 (K564) is an N6-acetyllysine. A Gelsolin-like repeat occupies 634-720; sequence PEPVLLDSSS…EHGGSQARFL (87 aa).

It belongs to the SEC23/SEC24 family. SEC23 subfamily. As to quaternary structure, COPII is composed of at least five proteins: the Sec23/24 complex, the Sec13/31 complex and Sar1. Interacts with SAR1A. In terms of tissue distribution, ubiquitously expressed.

The protein localises to the cytoplasmic vesicle. The protein resides in the COPII-coated vesicle membrane. Its subcellular location is the endoplasmic reticulum membrane. It is found in the cytoplasm. It localises to the cytosol. Its function is as follows. Component of the coat protein complex II (COPII) which promotes the formation of transport vesicles from the endoplasmic reticulum (ER). The coat has two main functions, the physical deformation of the endoplasmic reticulum membrane into vesicles and the selection of cargo molecules for their transport to the Golgi complex. The chain is Protein transport protein Sec23B from Homo sapiens (Human).